The sequence spans 439 residues: UPF0597 protein Dalk_4447 (439 aa).

This sequence belongs to the UPF0597 family.

This chain is UPF0597 protein Dalk_4447, found in Desulfatibacillum aliphaticivorans.